The sequence spans 311 residues: DNA-directed RNA polymerase subunit alpha (311 aa).

Residues 1–226 (MIEFEKPNIT…EHLDLFTNLT (226 aa)) form an alpha N-terminal domain (alpha-NTD) region. Residues 243 to 311 (DDRILDRTIE…IDLGLGLKDK (69 aa)) form an alpha C-terminal domain (alpha-CTD) region.

It belongs to the RNA polymerase alpha chain family. In terms of assembly, homodimer. The RNAP catalytic core consists of 2 alpha, 1 beta, 1 beta' and 1 omega subunit. When a sigma factor is associated with the core the holoenzyme is formed, which can initiate transcription.

The catalysed reaction is RNA(n) + a ribonucleoside 5'-triphosphate = RNA(n+1) + diphosphate. Functionally, DNA-dependent RNA polymerase catalyzes the transcription of DNA into RNA using the four ribonucleoside triphosphates as substrates. The protein is DNA-directed RNA polymerase subunit alpha of Streptococcus pneumoniae serotype 4 (strain ATCC BAA-334 / TIGR4).